Here is an 822-residue protein sequence, read N- to C-terminus: General transcription factor 3C polypeptide 4 (822 aa).

Met-1 carries the N-acetylmethionine modification. Residues 1 to 41 (MNTADQARVGPADDGPAPSGEEEGEGGGEAGGKEPAADAAP) are disordered. Position 19 is a phosphoserine (Ser-19). A Glycyl lysine isopeptide (Lys-Gly) (interchain with G-Cter in SUMO2) cross-link involves residue Lys-225. Phosphoserine occurs at positions 604 and 611. The segment at 608-663 (LVDSPGMGNADDEQQEEGTSSKQVVKQGLQERSKEGDVEEPTDDSLPTTGDAGGRE) is disordered. Lys-629 participates in a covalent cross-link: Glycyl lysine isopeptide (Lys-Gly) (interchain with G-Cter in SUMO2). The residue at position 652 (Ser-652) is a Phosphoserine.

Belongs to the TFIIIC subunit 4 family. Part of the TFIIIC subcomplex TFIIIC2, consisting of six subunits, GTF3C1, GTF3C2, GTF3C3, GTF3C4, GTF3C5 and GTF3C6. Interacts with BRF1, GTF3C1, GTF3C2, GTF3C5, GTF3C6, POLR3C and POLR3F.

The protein resides in the nucleus. The enzyme catalyses L-lysyl-[protein] + acetyl-CoA = N(6)-acetyl-L-lysyl-[protein] + CoA + H(+). Essential for RNA polymerase III to make a number of small nuclear and cytoplasmic RNAs, including 5S RNA, tRNA, and adenovirus-associated (VA) RNA of both cellular and viral origin. Has histone acetyltransferase activity (HAT) with unique specificity for free and nucleosomal H3. May cooperate with GTF3C5 in facilitating the recruitment of TFIIIB and RNA polymerase through direct interactions with BRF1, POLR3C and POLR3F. May be localized close to the A box. The polypeptide is General transcription factor 3C polypeptide 4 (GTF3C4) (Homo sapiens (Human)).